The following is a 113-amino-acid chain: Putative pterin-4-alpha-carbinolamine dehydratase (113 aa).

Belongs to the pterin-4-alpha-carbinolamine dehydratase family.

It catalyses the reaction (4aS,6R)-4a-hydroxy-L-erythro-5,6,7,8-tetrahydrobiopterin = (6R)-L-erythro-6,7-dihydrobiopterin + H2O. This Nitrosomonas europaea (strain ATCC 19718 / CIP 103999 / KCTC 2705 / NBRC 14298) protein is Putative pterin-4-alpha-carbinolamine dehydratase.